The following is a 332-amino-acid chain: Beta-ketoacyl-[acyl-carrier-protein] synthase III (332 aa).

Residues C112 and H252 contribute to the active site. The interval 253 to 257 (QANLR) is ACP-binding. N282 is an active-site residue.

The protein belongs to the thiolase-like superfamily. FabH family. Homodimer.

Its subcellular location is the cytoplasm. It carries out the reaction malonyl-[ACP] + acetyl-CoA + H(+) = 3-oxobutanoyl-[ACP] + CO2 + CoA. It participates in lipid metabolism; fatty acid biosynthesis. Catalyzes the condensation reaction of fatty acid synthesis by the addition to an acyl acceptor of two carbons from malonyl-ACP. Catalyzes the first condensation reaction which initiates fatty acid synthesis and may therefore play a role in governing the total rate of fatty acid production. Possesses both acetoacetyl-ACP synthase and acetyl transacylase activities. Its substrate specificity determines the biosynthesis of branched-chain and/or straight-chain of fatty acids. The sequence is that of Beta-ketoacyl-[acyl-carrier-protein] synthase III from Syntrophomonas wolfei subsp. wolfei (strain DSM 2245B / Goettingen).